Reading from the N-terminus, the 260-residue chain is MAKEWGYADHNGPDHWHEFYPIAKGDNQSPIELHTKDINHDPSLKAWTASYDPGSAKTILNNGRTCRVVFDDTYDRSMLRGGPLTAPYRLRQFHLHWGSSDDHGSEHTVDGVKYAAELHLVHWNPKYNTYGGALKQPDGIAVVGVFLKIGREKGEFQLFLDALDKIKTKGKEAPFTNFDPSCLFPTCRDYWTYRGSFTTPPCEECIVWLLLKEPITVSSDQVAKLRSLFSSAENEPPVPLVRNWRPPQPLKGRVVRASFK.

An N-acetylalanine modification is found at Ala-2. In terms of domain architecture, Alpha-carbonic anhydrase spans 3–259 (KEWGYADHNG…LKGRVVRASF (257 aa)). Phosphoserine is present on residues Ser-29, Ser-43, Ser-50, and Ser-55. An involved in proton transfer region spans residues 64–67 (RTCR). Thr-73 carries the post-translational modification Phosphothreonine. 3 residues coordinate Zn(2+): His-94, His-96, and His-119. Tyr-127 is modified (phosphotyrosine). A phosphothreonine mark is found at Thr-129 and Thr-176. S-glutathionyl cysteine occurs at positions 182 and 187. 198–199 (TT) lines the substrate pocket. Thr-216 bears the Phosphothreonine mark. The residue at position 219 (Ser-219) is a Phosphoserine.

This sequence belongs to the alpha-carbonic anhydrase family. Zn(2+) serves as cofactor. Post-translationally, S-thiolated both by thiol-disulfide exchange with glutathione disulfide and by oxyradical-initiated S-thiolation with reduced glutathione. S-glutathionylated in hepatocytes under oxidative stress.

Its subcellular location is the cytoplasm. The catalysed reaction is hydrogencarbonate + H(+) = CO2 + H2O. With respect to regulation, inhibited by acetazolamide. Its function is as follows. Reversible hydration of carbon dioxide. This chain is Carbonic anhydrase 3 (CA3), found in Equus caballus (Horse).